Consider the following 647-residue polypeptide: uncharacterized protein (647 aa).

A run of 5 helical transmembrane segments spans residues 14–38, 61–78, 90–110, 140–158, and 178–195; these read LFPI…LAVW, VVAL…TTLF, LWLT…PAFI, LSAV…VIYW, and VIAL…RSSF.

The protein resides in the cell membrane. This is an uncharacterized protein from Haemophilus influenzae (strain ATCC 51907 / DSM 11121 / KW20 / Rd).